Consider the following 376-residue polypeptide: Endoplasmic reticulum-Golgi intermediate compartment protein 2 (376 aa).

Residues 1-33 (MRRLNKKKALNFVRELDAFPKVPESYVETTASG) lie on the Cytoplasmic side of the membrane. The chain crosses the membrane as a helical span at residues 34 to 54 (GTVSLLAFTAMALLAFFEFFV). Residues 55–318 (YRDTWMKYEY…PFWQFLVRLC (264 aa)) are Lumenal-facing. A helical membrane pass occupies residues 319–339 (GIIGGIFSTTGMLHNLVGFCV). The Cytoplasmic portion of the chain corresponds to 340 to 376 (DVVCCRFKLGVYKPKSMSDFDGQINSLTPLLSENAEQ).

This sequence belongs to the ERGIC family.

It is found in the endoplasmic reticulum-Golgi intermediate compartment membrane. It localises to the golgi apparatus. The protein localises to the cis-Golgi network membrane. Its subcellular location is the endoplasmic reticulum membrane. Functionally, possible role in transport between endoplasmic reticulum and Golgi. The chain is Endoplasmic reticulum-Golgi intermediate compartment protein 2 (ergic2) from Danio rerio (Zebrafish).